The chain runs to 503 residues: Maturase K (503 aa).

The protein belongs to the intron maturase 2 family. MatK subfamily.

It localises to the plastid. Its subcellular location is the chloroplast. Usually encoded in the trnK tRNA gene intron. Probably assists in splicing its own and other chloroplast group II introns. The polypeptide is Maturase K (Rubus ursinus (California blackberry)).